The primary structure comprises 551 residues: Thermophilic beta-amylase (551 aa).

The N-terminal stretch at 1-32 is a signal peptide; that stretch reads MIGAFKRLGQKLFLTLLTASLIFASSIVTANA. Asp73 lines the substrate pocket. Ca(2+) is bound at residue Glu80. His113 and Asp121 together coordinate substrate. A Ca(2+)-binding site is contributed by Glu167. Glu195 functions as the Proton donor in the catalytic mechanism. 3 residues coordinate substrate: Lys310, His315, and Thr353. Glu392 (proton acceptor) is an active-site residue. Substrate contacts are provided by residues 393-394 and Arg423; that span reads NA. The CBM20 domain maps to 448–551; that stretch reads LTPNGTIPVT…TGSVTITWQN (104 aa).

It belongs to the glycosyl hydrolase 14 family. In terms of assembly, monomer. Ca(2+) serves as cofactor.

It catalyses the reaction Hydrolysis of (1-&gt;4)-alpha-D-glucosidic linkages in polysaccharides so as to remove successive maltose units from the non-reducing ends of the chains.. The sequence is that of Thermophilic beta-amylase from Thermoanaerobacterium thermosulfurigenes (Clostridium thermosulfurogenes).